The following is a 488-amino-acid chain: Ribulose bisphosphate carboxylase large chain (488 aa).

Substrate contacts are provided by Asn-127 and Thr-177. Lys-179 serves as the catalytic Proton acceptor. Substrate is bound at residue Lys-181. Lys-205, Asp-207, and Glu-208 together coordinate Mg(2+). N6-carboxylysine is present on Lys-205. The active-site Proton acceptor is His-297. Arg-298, His-330, and Ser-382 together coordinate substrate.

The protein belongs to the RuBisCO large chain family. Type I subfamily. Heterohexadecamer of 8 large chains and 8 small chains. Mg(2+) is required as a cofactor.

The protein localises to the plastid. It localises to the chloroplast. The catalysed reaction is 2 (2R)-3-phosphoglycerate + 2 H(+) = D-ribulose 1,5-bisphosphate + CO2 + H2O. It carries out the reaction D-ribulose 1,5-bisphosphate + O2 = 2-phosphoglycolate + (2R)-3-phosphoglycerate + 2 H(+). Functionally, ruBisCO catalyzes two reactions: the carboxylation of D-ribulose 1,5-bisphosphate, the primary event in carbon dioxide fixation, as well as the oxidative fragmentation of the pentose substrate in the photorespiration process. Both reactions occur simultaneously and in competition at the same active site. The sequence is that of Ribulose bisphosphate carboxylase large chain from Ectocarpus siliculosus (Brown alga).